We begin with the raw amino-acid sequence, 590 residues long: NADH-ubiquinone oxidoreductase chain 5 (590 aa).

15 helical membrane passes run 1-21, 31-51, 77-97, 104-124, 130-150, 167-187, 190-210, 230-250, 261-281, 314-336, 355-375, 398-418, 439-461, 466-486, and 568-588; these read MNLI…MSIM, LMVL…NNEL, LLFT…SLWY, INKF…IITA, LFIG…WWHG, IGDI…SINM, LMIQ…AAAT, TPVS…FLLI, IMLT…AAAA, AFLH…GSYI, LPMT…MPFL, IMIT…IMLF, HPLA…STLQ, VTMP…GVLL, and MIKN…LFIM.

It belongs to the complex I subunit 5 family.

The protein resides in the mitochondrion inner membrane. The enzyme catalyses a ubiquinone + NADH + 5 H(+)(in) = a ubiquinol + NAD(+) + 4 H(+)(out). Core subunit of the mitochondrial membrane respiratory chain NADH dehydrogenase (Complex I) that is believed to belong to the minimal assembly required for catalysis. Complex I functions in the transfer of electrons from NADH to the respiratory chain. The immediate electron acceptor for the enzyme is believed to be ubiquinone. The sequence is that of NADH-ubiquinone oxidoreductase chain 5 (MT-ND5) from Lycodon semicarinatus (Ryukyu odd-tooth snake).